The following is a 1106-amino-acid chain: Platelet-derived growth factor receptor beta (1106 aa).

The first 32 residues, 1–32 (MRLPGAMPALALKGELLLLSLLLLLEPQISQG), serve as a signal peptide directing secretion. 5 Ig-like C2-type domains span residues 33–120 (LVVT…YIFV), 129–210 (PNDA…YRLQ), 214–309 (INVS…INIT), 331–403 (HRSR…HEDA), and 416–524 (PVRV…VIVV). Over 33-532 (LVVTPPGPEL…VVPHSLPFKV (500 aa)) the chain is Extracellular. Asn-45, Asn-89, and Asn-103 each carry an N-linked (GlcNAc...) asparagine glycan. Cys-54 and Cys-100 are oxidised to a cystine. An intrachain disulfide couples Cys-149 to Cys-190. Asn-215 and Asn-230 each carry an N-linked (GlcNAc...) asparagine glycan. Cys-235 and Cys-291 are disulfide-bonded. Residues Asn-292, Asn-307, Asn-354, Asn-371, Asn-468, and Asn-479 are each glycosylated (N-linked (GlcNAc...) asparagine). The cysteines at positions 436 and 508 are disulfide-linked. The chain crosses the membrane as a helical span at residues 533 to 553 (VVISAILALVVLTIISLIILI). At 554–1106 (MLWQKKPRYE…PRAEAEDSFL (553 aa)) the chain is on the cytoplasmic side. 3 positions are modified to phosphotyrosine; by autocatalysis: Tyr-562, Tyr-579, and Tyr-581. A Protein kinase domain is found at 600–962 (LVLGRTLGSG…QLVLLLERLL (363 aa)). Residues 606-614 (LGSGAFGQV) and Lys-634 contribute to the ATP site. Phosphotyrosine; by ABL1 and ABL2 is present on Tyr-686. Residues Tyr-716, Tyr-740, Tyr-751, Tyr-763, Tyr-771, Tyr-775, and Tyr-778 each carry the phosphotyrosine; by autocatalysis modification. The active-site Proton acceptor is the Asp-826. A Phosphotyrosine; by autocatalysis modification is found at Tyr-857. Residues Tyr-934 and Tyr-970 each carry the phosphotyrosine; by ABL1 and ABL2 modification. A phosphotyrosine; by autocatalysis mark is found at Tyr-1009 and Tyr-1021. The disordered stretch occupies residues 1019-1106 (NDYIIPLPDP…PRAEAEDSFL (88 aa)). Positions 1043-1060 (SLASSTLNEVNTSSTISC) are enriched in polar residues. A compositionally biased stretch (acidic residues) spans 1066–1088 (PQDEPEPEPQLELQVEPEPELEQ).

The protein belongs to the protein kinase superfamily. Tyr protein kinase family. CSF-1/PDGF receptor subfamily. In terms of assembly, interacts with homodimeric PDGFB and PDGFD, and with heterodimers formed by PDGFA and PDGFB. May also interact with homodimeric PDGFC. Monomer in the absence of bound ligand. Interaction with homodimeric PDGFB, heterodimers formed by PDGFA and PDGFB or homodimeric PDGFD, leads to receptor dimerization, where both PDGFRA homodimers and heterodimers with PDGFRB are observed. Interacts with SH2B2/APS. Interacts directly (tyrosine phosphorylated) with SHB. Interacts (tyrosine phosphorylated) with PIK3R1 and RASA1. Interacts (tyrosine phosphorylated) with CBL. Interacts (tyrosine phosphorylated) with SRC and SRC family kinases. Interacts (tyrosine phosphorylated) with PIK3C2B, maybe indirectly. Interacts (tyrosine phosphorylated) with SHC1, GRB7, GRB10 and NCK1. Interaction with GRB2 is mediated by SHC1. Interacts (via C-terminus) with NHERF1. In terms of processing, autophosphorylated on tyrosine residues upon ligand binding. Autophosphorylation occurs in trans, i.e. one subunit of the dimeric receptor phosphorylates tyrosine residues on the other subunit. Phosphorylation at Tyr-579, and to a lesser degree, at Tyr-581, is important for interaction with SRC family kinases. Phosphorylation at Tyr-740 and Tyr-751 is important for interaction with PIK3R1. Phosphorylation at Tyr-751 is important for interaction with NCK1. Phosphorylation at Tyr-771 and Tyr-857 is important for interaction with RASA1/GAP. Phosphorylation at Tyr-857 is important for efficient phosphorylation of PLCG1 and PTPN11, resulting in increased phosphorylation of AKT1, MAPK1/ERK2 and/or MAPK3/ERK1, PDCD6IP/ALIX and STAM, and in increased cell proliferation. Phosphorylation at Tyr-1009 is important for interaction with PTPN11. Phosphorylation at Tyr-1009 and Tyr-1021 is important for interaction with PLCG1. Phosphorylation at Tyr-1021 is important for interaction with CBL; PLCG1 and CBL compete for the same binding site. Dephosphorylated by PTPRJ at Tyr-751, Tyr-857, Tyr-1009 and Tyr-1021. Dephosphorylated by PTPN2 at Tyr-579 and Tyr-1021. Post-translationally, N-glycosylated. Ubiquitinated. After autophosphorylation, the receptor is polyubiquitinated, leading to its degradation.

It is found in the cell membrane. Its subcellular location is the cytoplasmic vesicle. The protein localises to the lysosome lumen. It catalyses the reaction L-tyrosyl-[protein] + ATP = O-phospho-L-tyrosyl-[protein] + ADP + H(+). With respect to regulation, present in an inactive conformation in the absence of bound ligand. Binding of PDGFB and/or PDGFD leads to dimerization and activation by autophosphorylation on tyrosine residues. Inhibited by imatinib. Functionally, tyrosine-protein kinase that acts as a cell-surface receptor for homodimeric PDGFB and PDGFD and for heterodimers formed by PDGFA and PDGFB, and plays an essential role in the regulation of embryonic development, cell proliferation, survival, differentiation, chemotaxis and migration. Plays an essential role in blood vessel development by promoting proliferation, migration and recruitment of pericytes and smooth muscle cells to endothelial cells. Plays a role in the migration of vascular smooth muscle cells and the formation of neointima at vascular injury sites. Required for normal development of the cardiovascular system. Required for normal recruitment of pericytes (mesangial cells) in the kidney glomerulus, and for normal formation of a branched network of capillaries in kidney glomeruli. Promotes rearrangement of the actin cytoskeleton and the formation of membrane ruffles. Binding of its cognate ligands - homodimeric PDGFB, heterodimers formed by PDGFA and PDGFB or homodimeric PDGFD -leads to the activation of several signaling cascades; the response depends on the nature of the bound ligand and is modulated by the formation of heterodimers between PDGFRA and PDGFRB. Phosphorylates PLCG1, PIK3R1, PTPN11, RASA1/GAP, CBL, SHC1 and NCK1. Activation of PLCG1 leads to the production of the cellular signaling molecules diacylglycerol and inositol 1,4,5-trisphosphate, mobilization of cytosolic Ca(2+) and the activation of protein kinase C. Phosphorylation of PIK3R1, the regulatory subunit of phosphatidylinositol 3-kinase, leads to the activation of the AKT1 signaling pathway. Phosphorylation of SHC1, or of the C-terminus of PTPN11, creates a binding site for GRB2, resulting in the activation of HRAS, RAF1 and down-stream MAP kinases, including MAPK1/ERK2 and/or MAPK3/ERK1. Promotes phosphorylation and activation of SRC family kinases. Promotes phosphorylation of PDCD6IP/ALIX and STAM. Receptor signaling is down-regulated by protein phosphatases that dephosphorylate the receptor and its down-stream effectors, and by rapid internalization of the activated receptor. The sequence is that of Platelet-derived growth factor receptor beta (PDGFRB) from Homo sapiens (Human).